The following is a 1578-amino-acid chain: FERM and PDZ domain-containing protein 1 (1578 aa).

A PDZ domain is found at 57–135; it reads TVKIDKDTLL…SLSITVVRCT (79 aa). Positions 181 to 496 constitute an FERM domain; that stretch reads NVLKLYLENG…GYYRLLVDPV (316 aa). 3 disordered regions span residues 555-616, 720-743, and 759-831; these read KEEQ…EEDD, SDSS…QGWT, and PLAF…VKKY. Residues 720 to 729 show a composition bias toward polar residues; sequence SDSSESTASR. A compositionally biased stretch (low complexity) spans 730-742; that stretch reads QGGAPPAWGQQGW. Residues 793-811 are compositionally biased toward polar residues; the sequence is AEPSATSLQNKASTSSPEN. A compositionally biased stretch (basic residues) spans 822–831; that stretch reads PSRRGGVKKY. The important for interaction with GPSM2 stretch occupies residues 924-931; the sequence is EPETMETK. Disordered regions lie at residues 950-1030, 1070-1194, and 1347-1374; these read PNNK…LASN, KYTE…QGCQ, and PQPE…SAGS. Positions 968 to 986 are enriched in polar residues; the sequence is TPHCSNPGSSGPDTAQARP. A compositionally biased stretch (basic and acidic residues) spans 1100–1117; that stretch reads TKEEPQGQLSLERDREVT. Polar residues predominate over residues 1139–1150; the sequence is DVSNNVSQTLDI.

In terms of assembly, interacts with GPSM1. Interacts with GPSM2 (via TPR repeat region).

The protein localises to the cytoplasm. It is found in the cytosol. Its subcellular location is the cell membrane. In terms of biological role, stabilizes membrane-bound GPSM1, and thereby promotes its interaction with GNAI1. The chain is FERM and PDZ domain-containing protein 1 (FRMPD1) from Homo sapiens (Human).